A 327-amino-acid polypeptide reads, in one-letter code: GDP-mannose transporter (327 aa).

At 1-4 (MESS) the chain is on the cytoplasmic side. The helical transmembrane segment at 5-25 (LAAIANSGPISIFSYCVSSIL) threads the bilayer. The Lumenal segment spans residues 26–36 (MTVTNKYVLSG). The helical transmembrane segment at 37 to 57 (FSFNMNFLLLAVQSIVCIVTI) threads the bilayer. Residues 58–78 (GSLKSFGVITYRQFNKEEARK) are Cytoplasmic-facing. The helical transmembrane segment at 79–93 (WSPIAVLLVIMIYTS) threads the bilayer. At 94–102 (SKALQYLSI) the chain is on the lumenal side. The helical transmembrane segment at 103–125 (PVYTIFKNLTIILIAYGEVLWFG) threads the bilayer. Residues 126 to 131 (GKVTTM) are Cytoplasmic-facing. The chain crosses the membrane as a helical span at residues 132–149 (ALSSFLLMVFSSVVAWYG). The Lumenal portion of the chain corresponds to 150–163 (DEAVSGSGNESFIA). Asparagine 158 is a glycosylation site (N-linked (GlcNAc...) asparagine). A helical transmembrane segment spans residues 164-184 (LYLGYFWMATNCFASAAFVLI). The Cytoplasmic portion of the chain corresponds to 185–207 (MRKRIKLTNFKDFDTMYYNNLLS). Residues 208–228 (IPILLASSIIFEDWSAENLAV) traverse the membrane as a helical segment. Topologically, residues 229–238 (NFPSDNRTAT) are lumenal. Asparagine 234 carries N-linked (GlcNAc...) asparagine glycosylation. Residues 239–259 (IAAMVLSGASSVGISYCSAWC) form a helical membrane-spanning segment. Residues 260 to 266 (VRVTSST) lie on the Cytoplasmic side of the membrane. Residues 267–289 (TYSMVGALNKLPIALSGLVFFPA) traverse the membrane as a helical segment. The Lumenal segment spans residues 290 to 292 (AVN). A helical transmembrane segment spans residues 293-312 (FWSVASIFVGFAAGLVYAVA). Residues 313 to 327 (KQRQQKENVSLPSSK) lie on the Cytoplasmic side of the membrane.

This sequence belongs to the TPT transporter family. SLC35D subfamily. As to quaternary structure, homooligomer.

It is found in the golgi apparatus membrane. The protein resides in the cytoplasmic vesicle membrane. It localises to the endoplasmic reticulum membrane. Its function is as follows. Involved in the import of GDP-mannose from the cytoplasm into the Golgi lumen. This chain is GDP-mannose transporter (VRG4), found in Scheffersomyces stipitis (strain ATCC 58785 / CBS 6054 / NBRC 10063 / NRRL Y-11545) (Yeast).